Reading from the N-terminus, the 268-residue chain is N-formylmaleamate deformylase (268 aa).

Positions 28–251 constitute an AB hydrolase-1 domain; that stretch reads ALILVPGITS…NAGHMIPWDD (224 aa). Residues Ser-101, Glu-221, and His-245 each act as charge relay system in the active site.

It carries out the reaction N-formylmaleamate + H2O = maleamate + formate + H(+). Its pathway is cofactor degradation; nicotinate degradation. Deformylase that catalyzes the conversion of N-formylmaleamic acid to maleamate in the aerobic nicotinate degradation pathway. The sequence is that of N-formylmaleamate deformylase (nicD) from Pseudomonas putida (strain ATCC 47054 / DSM 6125 / CFBP 8728 / NCIMB 11950 / KT2440).